We begin with the raw amino-acid sequence, 105 residues long: MLLNKITFFERFEHDILSGAKTITLRDEAESHVIVGQILPVSTFETERWFCDIQIIDVTPVKLTELTEVHAKQENMTLPQLRDVIAEIYPGLEQLFMIRFRILSQ.

In terms of domain architecture, ASCH spans 7 to 93; that stretch reads TFFERFEHDI…VIAEIYPGLE (87 aa). Lys21 acts as the Proton acceptor in catalysis. The Nucleophile role is filled by Thr24. Glu74 functions as the Proton donor in the catalytic mechanism.

The protein belongs to the N(4)-acetylcytidine amidohydrolase family.

It carries out the reaction N(4)-acetylcytidine + H2O = cytidine + acetate + H(+). It catalyses the reaction N(4)-acetyl-2'-deoxycytidine + H2O = 2'-deoxycytidine + acetate + H(+). The catalysed reaction is N(4)-acetylcytosine + H2O = cytosine + acetate + H(+). Catalyzes the hydrolysis of N(4)-acetylcytidine (ac4C). The chain is N(4)-acetylcytidine amidohydrolase from Shewanella baltica (strain OS195).